Consider the following 727-residue polypeptide: Protein EXECUTER 1, chloroplastic (727 aa).

Disordered stretches follow at residues 1–51 (MAAA…SRLF), 65–102 (LAGAAPAPAPRRRVSSVVRCGGGGGGVRSPDDADAGSG), 340–381 (ISSS…LPSD), and 413–455 (DEDD…SGDE). The transit peptide at 1-83 (MAAAVSTAPR…PRRRVSSVVR (83 aa)) directs the protein to the chloroplast. Composition is skewed to low complexity over residues 19 to 33 (SSSCCSSSSSSASMS) and 42 to 51 (PSSGSGSRLF). Acidic residues predominate over residues 413–441 (DEDDENDNPEDEIESSEDIGDGDNVEEAE).

The protein resides in the plastid. Its subcellular location is the chloroplast. In terms of biological role, together with EX2, enables higher plants to perceive singlet oxygen as a stress signal in plastid that activates a genetically determined nuclear stress response program which triggers a programmed cell death (PCD). This transfer of singlet oxygen-induced stress-related signals from the plastid to the nucleus that triggers genetically controlled PCD pathway is unique to photosynthetic eukaryotes and operates under mild stress conditions, impeding photosystem II (PSII) without causing photooxidative damage of the plant. This chain is Protein EXECUTER 1, chloroplastic, found in Oryza sativa subsp. japonica (Rice).